The chain runs to 151 residues: UPF0208 membrane protein Spro_3315 (151 aa).

A run of 2 helical transmembrane segments spans residues 46 to 64 (FAVR…WQIA) and 70 to 90 (GPAI…LWWL).

The protein belongs to the UPF0208 family.

It is found in the cell inner membrane. The polypeptide is UPF0208 membrane protein Spro_3315 (Serratia proteamaculans (strain 568)).